The chain runs to 75 residues: Large ribosomal subunit protein bL28 (75 aa).

This sequence belongs to the bacterial ribosomal protein bL28 family.

The protein is Large ribosomal subunit protein bL28 of Baumannia cicadellinicola subsp. Homalodisca coagulata.